An 837-amino-acid polypeptide reads, in one-letter code: Endo-1,4-beta-xylanase Z (837 aa).

A signal peptide spans 1 to 28 (MSRKLFSVLLVGLMLMTSLLVTISSTSA). Positions 299 to 420 (TRIEAEDYDG…PVNIDWFTFG (122 aa)) constitute a CBM6 domain. Residues 424 to 492 (SSTGLGDLNG…ILRIITEFPG (69 aa)) enclose the Dockerin domain. One can recognise a GH10 domain in the interval 512–833 (TISGNALRDY…KPAYNAIKEA (322 aa)). E645 functions as the Proton donor in the catalytic mechanism. E754 serves as the catalytic Nucleophile. An intrachain disulfide couples C783 to C789.

Belongs to the glycosyl hydrolase 10 (cellulase F) family.

The enzyme catalyses Endohydrolysis of (1-&gt;4)-beta-D-xylosidic linkages in xylans.. The polypeptide is Endo-1,4-beta-xylanase Z (xynZ) (Acetivibrio thermocellus (strain ATCC 27405 / DSM 1237 / JCM 9322 / NBRC 103400 / NCIMB 10682 / NRRL B-4536 / VPI 7372) (Clostridium thermocellum)).